Reading from the N-terminus, the 185-residue chain is Ribosome-recycling factor (185 aa).

The interval 142 to 161 (LVKDGEAGEDEGARAEKELD) is disordered.

Belongs to the RRF family.

Its subcellular location is the cytoplasm. In terms of biological role, responsible for the release of ribosomes from messenger RNA at the termination of protein biosynthesis. May increase the efficiency of translation by recycling ribosomes from one round of translation to another. The protein is Ribosome-recycling factor of Paenarthrobacter aurescens (strain TC1).